A 502-amino-acid chain; its full sequence is Probable cytosol aminopeptidase (502 aa).

Mn(2+)-binding residues include Lys-269 and Asp-274. The active site involves Lys-281. The Mn(2+) site is built by Asp-292, Asp-351, and Glu-353. Arg-355 is an active-site residue.

The protein belongs to the peptidase M17 family. Requires Mn(2+) as cofactor.

The protein resides in the cytoplasm. The catalysed reaction is Release of an N-terminal amino acid, Xaa-|-Yaa-, in which Xaa is preferably Leu, but may be other amino acids including Pro although not Arg or Lys, and Yaa may be Pro. Amino acid amides and methyl esters are also readily hydrolyzed, but rates on arylamides are exceedingly low.. The enzyme catalyses Release of an N-terminal amino acid, preferentially leucine, but not glutamic or aspartic acids.. Presumably involved in the processing and regular turnover of intracellular proteins. Catalyzes the removal of unsubstituted N-terminal amino acids from various peptides. This chain is Probable cytosol aminopeptidase, found in Shewanella loihica (strain ATCC BAA-1088 / PV-4).